The following is a 473-amino-acid chain: Ribulose bisphosphate carboxylase large chain (473 aa).

Positions 116 and 166 each coordinate substrate. K168 acts as the Proton acceptor in catalysis. A substrate-binding site is contributed by K170. The Mg(2+) site is built by K194, D196, and E197. An N6-carboxylysine modification is found at K194. The active-site Proton acceptor is the H287. Residues R288, H320, and S372 each coordinate substrate.

This sequence belongs to the RuBisCO large chain family. Type I subfamily. In terms of assembly, heterohexadecamer of 8 large chains and 8 small chains. It depends on Mg(2+) as a cofactor.

The enzyme catalyses 2 (2R)-3-phosphoglycerate + 2 H(+) = D-ribulose 1,5-bisphosphate + CO2 + H2O. It carries out the reaction D-ribulose 1,5-bisphosphate + O2 = 2-phosphoglycolate + (2R)-3-phosphoglycerate + 2 H(+). RuBisCO catalyzes two reactions: the carboxylation of D-ribulose 1,5-bisphosphate, the primary event in carbon dioxide fixation, as well as the oxidative fragmentation of the pentose substrate. Both reactions occur simultaneously and in competition at the same active site. This is Ribulose bisphosphate carboxylase large chain from Methylococcus capsulatus (strain ATCC 33009 / NCIMB 11132 / Bath).